The primary structure comprises 203 residues: Thymidylate kinase (203 aa).

ATP is bound at residue 9–16; sequence GPEGSGKT.

This sequence belongs to the thymidylate kinase family.

It carries out the reaction dTMP + ATP = dTDP + ADP. Phosphorylation of dTMP to form dTDP in both de novo and salvage pathways of dTTP synthesis. This is Thymidylate kinase from Staphylococcus haemolyticus (strain JCSC1435).